Consider the following 331-residue polypeptide: Small ribosomal subunit protein uS2 (331 aa).

Belongs to the universal ribosomal protein uS2 family.

The sequence is that of Small ribosomal subunit protein uS2 from Rhodopseudomonas palustris (strain BisB5).